A 509-amino-acid polypeptide reads, in one-letter code: ATP synthase subunit alpha (509 aa).

169–176 (GDRQTGKT) contacts ATP.

This sequence belongs to the ATPase alpha/beta chains family. As to quaternary structure, F-type ATPases have 2 components, CF(1) - the catalytic core - and CF(0) - the membrane proton channel. CF(1) has five subunits: alpha(3), beta(3), gamma(1), delta(1), epsilon(1). CF(0) has four main subunits: a(1), b(1), b'(1) and c(9-12).

It localises to the cell inner membrane. The enzyme catalyses ATP + H2O + 4 H(+)(in) = ADP + phosphate + 5 H(+)(out). Its function is as follows. Produces ATP from ADP in the presence of a proton gradient across the membrane. The alpha chain is a regulatory subunit. The sequence is that of ATP synthase subunit alpha from Bradyrhizobium sp. (strain ORS 278).